Consider the following 305-residue polypeptide: Protein FdhE homolog (305 aa).

It belongs to the FdhE family.

It localises to the cytoplasm. In terms of biological role, necessary for formate dehydrogenase activity. The chain is Protein FdhE homolog from Stutzerimonas stutzeri (strain A1501) (Pseudomonas stutzeri).